Reading from the N-terminus, the 592-residue chain is Aspartate--tRNA ligase (592 aa).

Glu177 contacts L-aspartate. The interval 201-204 (QIFK) is aspartate. Arg223 is an L-aspartate binding site. Residues 223 to 225 (RDE) and Gln232 contribute to the ATP site. His451 provides a ligand contact to L-aspartate. Glu485 contributes to the ATP binding site. Arg492 contributes to the L-aspartate binding site. Residue 537-540 (GLDR) coordinates ATP.

The protein belongs to the class-II aminoacyl-tRNA synthetase family. Type 1 subfamily. In terms of assembly, homodimer.

The protein localises to the cytoplasm. It carries out the reaction tRNA(Asp) + L-aspartate + ATP = L-aspartyl-tRNA(Asp) + AMP + diphosphate. Catalyzes the attachment of L-aspartate to tRNA(Asp) in a two-step reaction: L-aspartate is first activated by ATP to form Asp-AMP and then transferred to the acceptor end of tRNA(Asp). This is Aspartate--tRNA ligase from Bacillus licheniformis (strain ATCC 14580 / DSM 13 / JCM 2505 / CCUG 7422 / NBRC 12200 / NCIMB 9375 / NCTC 10341 / NRRL NRS-1264 / Gibson 46).